The sequence spans 450 residues: ATP-dependent protease ATPase subunit HslU (450 aa).

ATP contacts are provided by residues valine 29, 71–76 (GVGKTE), aspartate 261, glutamate 328, and arginine 400.

It belongs to the ClpX chaperone family. HslU subfamily. In terms of assembly, a double ring-shaped homohexamer of HslV is capped on each side by a ring-shaped HslU homohexamer. The assembly of the HslU/HslV complex is dependent on binding of ATP.

Its subcellular location is the cytoplasm. In terms of biological role, ATPase subunit of a proteasome-like degradation complex; this subunit has chaperone activity. The binding of ATP and its subsequent hydrolysis by HslU are essential for unfolding of protein substrates subsequently hydrolyzed by HslV. HslU recognizes the N-terminal part of its protein substrates and unfolds these before they are guided to HslV for hydrolysis. The protein is ATP-dependent protease ATPase subunit HslU of Rickettsia rickettsii (strain Iowa).